Consider the following 383-residue polypeptide: GDSL esterase/lipase At1g28610 (383 aa).

An N-terminal signal peptide occupies residues 1 to 22; the sequence is MASLDSLVSFFLSTLFVTIVSS. The Nucleophile role is filled by Ser-38. 3 N-linked (GlcNAc...) asparagine glycosylation sites follow: Asn-134, Asn-184, and Asn-315. Residues Asp-340 and His-343 contribute to the active site.

Belongs to the 'GDSL' lipolytic enzyme family.

Its subcellular location is the secreted. The chain is GDSL esterase/lipase At1g28610 from Arabidopsis thaliana (Mouse-ear cress).